Here is a 150-residue protein sequence, read N- to C-terminus: uncharacterized protein (150 aa).

This sequence belongs to the OsmC/Ohr family.

This is an uncharacterized protein from Bacillus subtilis (strain 168).